The chain runs to 49 residues: Disintegrin ocellatin (49 aa).

A Disintegrin domain is found at Asp-1–Glu-47. 4 cysteine pairs are disulfide-bonded: Cys-2–Cys-11, Cys-7–Cys-32, Cys-8–Cys-37, and Cys-20–Cys-39. A Cell attachment site motif is present at residues Arg-24–Asp-26.

The protein belongs to the venom metalloproteinase (M12B) family. P-II subfamily. P-IIa sub-subfamily. Monomer. As to expression, expressed by the venom gland.

It is found in the secreted. Functionally, inhibits ADP-induced human platelet aggregation. In Echis ocellatus (Ocellated saw-scaled viper), this protein is Disintegrin ocellatin.